The sequence spans 149 residues: UPF0179 protein Hlac_2319 (149 aa).

Belongs to the UPF0179 family.

The chain is UPF0179 protein Hlac_2319 from Halorubrum lacusprofundi (strain ATCC 49239 / DSM 5036 / JCM 8891 / ACAM 34).